The primary structure comprises 419 residues: UDP-N-acetylglucosamine 1-carboxyvinyltransferase (419 aa).

22–23 (KN) is a binding site for phosphoenolpyruvate. Arg-92 contributes to the UDP-N-acetyl-alpha-D-glucosamine binding site. Cys-116 acts as the Proton donor in catalysis. 2-(S-cysteinyl)pyruvic acid O-phosphothioketal is present on Cys-116. Asp-306 and Ile-328 together coordinate UDP-N-acetyl-alpha-D-glucosamine.

The protein belongs to the EPSP synthase family. MurA subfamily.

The protein resides in the cytoplasm. The catalysed reaction is phosphoenolpyruvate + UDP-N-acetyl-alpha-D-glucosamine = UDP-N-acetyl-3-O-(1-carboxyvinyl)-alpha-D-glucosamine + phosphate. It participates in cell wall biogenesis; peptidoglycan biosynthesis. Its function is as follows. Cell wall formation. Adds enolpyruvyl to UDP-N-acetylglucosamine. In Pseudoalteromonas translucida (strain TAC 125), this protein is UDP-N-acetylglucosamine 1-carboxyvinyltransferase.